The sequence spans 394 residues: 1-deoxy-D-xylulose 5-phosphate reductoisomerase (394 aa).

NADPH is bound by residues threonine 12, glycine 13, serine 14, isoleucine 15, glycine 38, asparagine 41, and asparagine 132. Position 133 (lysine 133) interacts with 1-deoxy-D-xylulose 5-phosphate. Residue glutamate 134 coordinates NADPH. Aspartate 156 contacts Mn(2+). Positions 157, 158, 182, and 205 each coordinate 1-deoxy-D-xylulose 5-phosphate. Glutamate 158 is a binding site for Mn(2+). Glycine 211 lines the NADPH pocket. 1-deoxy-D-xylulose 5-phosphate-binding residues include serine 218, asparagine 223, lysine 224, and glutamate 227. Mn(2+) is bound at residue glutamate 227.

This sequence belongs to the DXR family. The cofactor is Mg(2+). Requires Mn(2+) as cofactor.

It catalyses the reaction 2-C-methyl-D-erythritol 4-phosphate + NADP(+) = 1-deoxy-D-xylulose 5-phosphate + NADPH + H(+). Its pathway is isoprenoid biosynthesis; isopentenyl diphosphate biosynthesis via DXP pathway; isopentenyl diphosphate from 1-deoxy-D-xylulose 5-phosphate: step 1/6. Its function is as follows. Catalyzes the NADPH-dependent rearrangement and reduction of 1-deoxy-D-xylulose-5-phosphate (DXP) to 2-C-methyl-D-erythritol 4-phosphate (MEP). The chain is 1-deoxy-D-xylulose 5-phosphate reductoisomerase from Pseudarthrobacter chlorophenolicus (strain ATCC 700700 / DSM 12829 / CIP 107037 / JCM 12360 / KCTC 9906 / NCIMB 13794 / A6) (Arthrobacter chlorophenolicus).